The primary structure comprises 472 residues: UDP-N-acetylmuramoyl-L-alanyl-D-glutamate--2,6-diaminopimelate ligase (472 aa).

S21 serves as a coordination point for UDP-N-acetyl-alpha-D-muramoyl-L-alanyl-D-glutamate. ATP is bound at residue 99 to 105; that stretch reads GTNGKTS. UDP-N-acetyl-alpha-D-muramoyl-L-alanyl-D-glutamate is bound by residues 143–144, S170, Q176, and R178; that span reads TT. The residue at position 210 (K210) is an N6-carboxylysine. Meso-2,6-diaminopimelate is bound by residues R367, 391 to 394, G440, and E444; that span reads DNPR. The short motif at 391 to 394 is the Meso-diaminopimelate recognition motif element; sequence DNPR.

It belongs to the MurCDEF family. MurE subfamily. Requires Mg(2+) as cofactor. Carboxylation is probably crucial for Mg(2+) binding and, consequently, for the gamma-phosphate positioning of ATP.

It localises to the cytoplasm. The enzyme catalyses UDP-N-acetyl-alpha-D-muramoyl-L-alanyl-D-glutamate + meso-2,6-diaminopimelate + ATP = UDP-N-acetyl-alpha-D-muramoyl-L-alanyl-gamma-D-glutamyl-meso-2,6-diaminopimelate + ADP + phosphate + H(+). It functions in the pathway cell wall biogenesis; peptidoglycan biosynthesis. Catalyzes the addition of meso-diaminopimelic acid to the nucleotide precursor UDP-N-acetylmuramoyl-L-alanyl-D-glutamate (UMAG) in the biosynthesis of bacterial cell-wall peptidoglycan. In Anaplasma marginale (strain St. Maries), this protein is UDP-N-acetylmuramoyl-L-alanyl-D-glutamate--2,6-diaminopimelate ligase.